The following is a 238-amino-acid chain: Tyrosine recombinase XerD-like (238 aa).

Residues 1-75 form the Core-binding (CB) domain; that stretch reads MKLPNEIEEY…SANQYFLFLY (75 aa). Residues 90–238 form the Tyr recombinase domain; that stretch reads VQKKTQSSES…TITALEKYYR (149 aa). Catalysis depends on residues lysine 154 and arginine 204. Tyrosine 236 (O-(3'-phospho-DNA)-tyrosine intermediate) is an active-site residue.

This sequence belongs to the 'phage' integrase family. XerD-like subfamily.

It is found in the cytoplasm. Functionally, putative tyrosine recombinase. Not involved in the cutting and rejoining of the recombining DNA molecules on dif(SL) site. This chain is Tyrosine recombinase XerD-like, found in Lactococcus lactis subsp. cremoris (strain SK11).